We begin with the raw amino-acid sequence, 198 residues long: MPDSALPPCSILLLAGGRGQRMGGRDKGLIEWQGLPLIAHLHRLVRPLTDDLIVSCNRNQERYAAYADRVVSDDSRDFPGPLAGIRAGLAVARHPWLLVLPCDAPRIDRALLETLLQAAGRTPARPWMLRCGGQWEPLFSLIPTHLAEEIEHAWRQGDRSPRHVLLPLGAEAIELAAGDPRLANLNTPELLANHRELK.

Residues Leu14–Gly16, Lys27, Asp73, and Asp103 contribute to the GTP site. Asp103 is a binding site for Mg(2+).

It belongs to the MobA family. In terms of assembly, monomer. Mg(2+) serves as cofactor.

The protein localises to the cytoplasm. It carries out the reaction Mo-molybdopterin + GTP + H(+) = Mo-molybdopterin guanine dinucleotide + diphosphate. Functionally, transfers a GMP moiety from GTP to Mo-molybdopterin (Mo-MPT) cofactor (Moco or molybdenum cofactor) to form Mo-molybdopterin guanine dinucleotide (Mo-MGD) cofactor. The chain is Molybdenum cofactor guanylyltransferase from Pseudomonas aeruginosa (strain ATCC 15692 / DSM 22644 / CIP 104116 / JCM 14847 / LMG 12228 / 1C / PRS 101 / PAO1).